A 205-amino-acid chain; its full sequence is Adenylyl-sulfate kinase (205 aa).

39-46 (GLSGAGKS) is a binding site for ATP. Catalysis depends on Ser113, which acts as the Phosphoserine intermediate.

This sequence belongs to the APS kinase family.

The catalysed reaction is adenosine 5'-phosphosulfate + ATP = 3'-phosphoadenylyl sulfate + ADP + H(+). Its pathway is sulfur metabolism; hydrogen sulfide biosynthesis; sulfite from sulfate: step 2/3. In terms of biological role, catalyzes the synthesis of activated sulfate. In Vibrio parahaemolyticus serotype O3:K6 (strain RIMD 2210633), this protein is Adenylyl-sulfate kinase.